Here is a 448-residue protein sequence, read N- to C-terminus: MSTMTPAEIVSELDKHIIGQGRAKKAVAVALRNRWRRQQVEEPLRQEITPKNILMIGPTGVGKTEIARRLAKLADAPFIKIEATKFTEVGYVGRDVDSIVRDLIEISVKQTRETEMRKVRTKAEDQAEDRILDILLPSARPVGFGASSGAADTVDEGSTTRQTFRKRLREGLLDDKEVELDVEQPQVGMDIMGPPGMEDMTEQIRSMFANIGGGKKTRRKMKVKEALKALTDEEAARMLNDEEVKTKAVQNVEQNGIVFLDEIDKIASRNEAGGGEVSRQGVQRDLLPLVEGTTINTKYGMVKTDHILFIASGAFHLAKPSDLIPELQGRFPIRVELDSLSVNDFESILVSTDASLVKQYQALLATEDVHLEFADDGIRRLAEIAYAVNEKTENIGARRLYTVIEKLLEEVSFAAGNHSGRTVQIDAAYVDRALNEVAEDEDLSRYVL.

Residues isoleucine 18, glycine 60 to glutamate 65, aspartate 261, glutamate 326, and arginine 398 each bind ATP.

It belongs to the ClpX chaperone family. HslU subfamily. As to quaternary structure, a double ring-shaped homohexamer of HslV is capped on each side by a ring-shaped HslU homohexamer. The assembly of the HslU/HslV complex is dependent on binding of ATP.

It is found in the cytoplasm. ATPase subunit of a proteasome-like degradation complex; this subunit has chaperone activity. The binding of ATP and its subsequent hydrolysis by HslU are essential for unfolding of protein substrates subsequently hydrolyzed by HslV. HslU recognizes the N-terminal part of its protein substrates and unfolds these before they are guided to HslV for hydrolysis. The protein is ATP-dependent protease ATPase subunit HslU of Paraburkholderia xenovorans (strain LB400).